Consider the following 118-residue polypeptide: Large ribosomal subunit protein bL20 (118 aa).

This sequence belongs to the bacterial ribosomal protein bL20 family.

Functionally, binds directly to 23S ribosomal RNA and is necessary for the in vitro assembly process of the 50S ribosomal subunit. It is not involved in the protein synthesizing functions of that subunit. In Trichormus variabilis (strain ATCC 29413 / PCC 7937) (Anabaena variabilis), this protein is Large ribosomal subunit protein bL20.